Consider the following 494-residue polypeptide: UDP-N-acetylmuramoyl-L-alanyl-D-glutamate--2,6-diaminopimelate ligase (494 aa).

Ser30 is a binding site for UDP-N-acetyl-alpha-D-muramoyl-L-alanyl-D-glutamate. 110-116 contributes to the ATP binding site; it reads GTNGKTS. UDP-N-acetyl-alpha-D-muramoyl-L-alanyl-D-glutamate contacts are provided by residues 152-153, Ser179, and Arg187; that span reads TT. Lys219 carries the N6-carboxylysine modification. Residues Arg380, 404–407, Gly456, and Glu460 contribute to the meso-2,6-diaminopimelate site; that span reads DNPR. Residues 404–407 carry the Meso-diaminopimelate recognition motif motif; it reads DNPR.

It belongs to the MurCDEF family. MurE subfamily. The cofactor is Mg(2+). Post-translationally, carboxylation is probably crucial for Mg(2+) binding and, consequently, for the gamma-phosphate positioning of ATP.

It is found in the cytoplasm. The catalysed reaction is UDP-N-acetyl-alpha-D-muramoyl-L-alanyl-D-glutamate + meso-2,6-diaminopimelate + ATP = UDP-N-acetyl-alpha-D-muramoyl-L-alanyl-gamma-D-glutamyl-meso-2,6-diaminopimelate + ADP + phosphate + H(+). It participates in cell wall biogenesis; peptidoglycan biosynthesis. Catalyzes the addition of meso-diaminopimelic acid to the nucleotide precursor UDP-N-acetylmuramoyl-L-alanyl-D-glutamate (UMAG) in the biosynthesis of bacterial cell-wall peptidoglycan. This chain is UDP-N-acetylmuramoyl-L-alanyl-D-glutamate--2,6-diaminopimelate ligase, found in Alkaliphilus metalliredigens (strain QYMF).